The sequence spans 584 residues: Isocitrate dehydrogenase kinase/phosphatase (584 aa).

ATP is bound by residues Ala315–Met321 and Lys336. Asp371 is an active-site residue.

The protein belongs to the AceK family.

The protein localises to the cytoplasm. It carries out the reaction L-seryl-[isocitrate dehydrogenase] + ATP = O-phospho-L-seryl-[isocitrate dehydrogenase] + ADP + H(+). Bifunctional enzyme which can phosphorylate or dephosphorylate isocitrate dehydrogenase (IDH) on a specific serine residue. This is a regulatory mechanism which enables bacteria to bypass the Krebs cycle via the glyoxylate shunt in response to the source of carbon. When bacteria are grown on glucose, IDH is fully active and unphosphorylated, but when grown on acetate or ethanol, the activity of IDH declines drastically concomitant with its phosphorylation. The protein is Isocitrate dehydrogenase kinase/phosphatase of Serratia proteamaculans (strain 568).